Here is a 304-residue protein sequence, read N- to C-terminus: Thiosulfate sulfurtransferase TUM1 (304 aa).

Rhodanese domains are found at residues 20–137 (KVHR…PLDS) and 177–299 (LAKK…PEWI). Positions 191–201 (RFEGTEPEPRS) are enriched in basic and acidic residues. The disordered stretch occupies residues 191-222 (RFEGTEPEPRSDIPSGHIPGTQPLPYGSLLDP). Serine 201 is subject to Phosphoserine. Cysteine 259 functions as the Cysteine persulfide intermediate in the catalytic mechanism. Serine 264 is modified (phosphoserine).

It localises to the mitochondrion. Its subcellular location is the cytoplasm. The enzyme catalyses thiosulfate + hydrogen cyanide = thiocyanate + sulfite + 2 H(+). Sulfur transferase that accepts persulfite from NFS1 and transfers it to UBA4 in the pathway for 2-thiolation of the wobble uridine base of tRNAs. Stimulates sulfur transfer by NFS1. Involved in metabolism of sterol esters in a tRNA thiolation pathway-independent manner. The sequence is that of Thiosulfate sulfurtransferase TUM1 from Saccharomyces cerevisiae (strain ATCC 204508 / S288c) (Baker's yeast).